A 205-amino-acid polypeptide reads, in one-letter code: Recombination protein RecR (205 aa).

The C4-type zinc finger occupies 60–75; sequence CKVCHNISDTETCRIC. In terms of domain architecture, Toprim spans 83–178; the sequence is STICVVESIR…KLSVIARGIS (96 aa).

This sequence belongs to the RecR family.

May play a role in DNA repair. It seems to be involved in an RecBC-independent recombinational process of DNA repair. It may act with RecF and RecO. The polypeptide is Recombination protein RecR (Phocaeicola vulgatus (strain ATCC 8482 / DSM 1447 / JCM 5826 / CCUG 4940 / NBRC 14291 / NCTC 11154) (Bacteroides vulgatus)).